A 97-amino-acid polypeptide reads, in one-letter code: Large ribosomal subunit protein eL21 (97 aa).

The disordered stretch occupies residues 1-24 (MQKSEGFRSKTRYKLQKHPRQKGM). The span at 9-21 (SKTRYKLQKHPRQ) shows a compositional bias: basic residues.

This sequence belongs to the eukaryotic ribosomal protein eL21 family.

This Methanococcus maripaludis (strain DSM 14266 / JCM 13030 / NBRC 101832 / S2 / LL) protein is Large ribosomal subunit protein eL21.